We begin with the raw amino-acid sequence, 185 residues long: Ribosome-recycling factor (185 aa).

The protein belongs to the RRF family.

Its subcellular location is the cytoplasm. Responsible for the release of ribosomes from messenger RNA at the termination of protein biosynthesis. May increase the efficiency of translation by recycling ribosomes from one round of translation to another. The sequence is that of Ribosome-recycling factor from Azotobacter vinelandii (strain DJ / ATCC BAA-1303).